Consider the following 279-residue polypeptide: Urease accessory protein UreD (279 aa).

Belongs to the UreD family. In terms of assembly, ureD, UreF and UreG form a complex that acts as a GTP-hydrolysis-dependent molecular chaperone, activating the urease apoprotein by helping to assemble the nickel containing metallocenter of UreC. The UreE protein probably delivers the nickel.

Its subcellular location is the cytoplasm. Its function is as follows. Required for maturation of urease via the functional incorporation of the urease nickel metallocenter. This is Urease accessory protein UreD from Pseudomonas fluorescens (strain Pf0-1).